Reading from the N-terminus, the 229-residue chain is Urease accessory protein UreG (229 aa).

GTP is bound at residue 24–31 (GPVGSGKT).

Belongs to the SIMIBI class G3E GTPase family. UreG subfamily. Homodimer. UreD, UreF and UreG form a complex that acts as a GTP-hydrolysis-dependent molecular chaperone, activating the urease apoprotein by helping to assemble the nickel containing metallocenter of UreC. The UreE protein probably delivers the nickel.

Its subcellular location is the cytoplasm. Its function is as follows. Facilitates the functional incorporation of the urease nickel metallocenter. This process requires GTP hydrolysis, probably effectuated by UreG. The protein is Urease accessory protein UreG of Albidiferax ferrireducens (strain ATCC BAA-621 / DSM 15236 / T118) (Rhodoferax ferrireducens).